We begin with the raw amino-acid sequence, 799 residues long: MPERLAETLLDLWTPLIILWITLPSFVYMAPMNQAHVLTTGSPLELSRQSEEMRILNRSKRGWVWNQMFVLEEFSGPEPILVGRLHTDLDPGSKKIKYILSGDGAGTIFQINDITGDIHAIKRLDREEKAEYTLTAQAVDWETNKPLEPPSEFIIKVQDINDNAPEFLNGPYHATVPEMSILGTSVTNVTATDADDPVYGNSAKLVYSILEGQPYFSIEPETAIIKTALPNMDREAKEEYLVVIQAKDMGGHSGGLSGTTTLTVTLTDVNDNPPKFAQSLYHFSVPEDVVLGTAIGRVKANDQDIGENAQSSYDIIDGDGTALFEITSDAQAQDGVIRLRKPLDFETKKSYTLKVEAANIHIDPRFSGRGPFKDTATVKIVVEDADEPPVFSSPTYLLEVHENAALNSVIGQVTARDPDITSSPIRFSIDRHTDLERQFNINADDGKITLATPLDRELSVWHNISIIATEIRNHSQISRVPVAIKVLDVNDNAPEFASEYEAFLCENGKPGQVIQTVSAMDKDDPKNGHFFLYSLLPEMVNNPNFTIKKNEDNSLSILAKHNGFNRQKQEVYLLPIVISDSGNPPLSSTSTLTIRVCGCSNDGVVQSCNVEPYVLPIGLSMGALIAILACIILLLVIVVLFVTLRRHKNEPLIIKDDEDVRENIIRYDDEGGGEEDTEAFDIATLQNPDGINGFLPRKDIKPDLQFMPRQGLAPVPNGVDVDEFINVRLHEADNDPTAPPYDSIQIYGYEGRGSVAGSLSSLESTTSDSDQNFDYLSDWGPRFKRLGELYSVGESDKET.

A signal peptide spans 1–29 (MPERLAETLLDLWTPLIILWITLPSFVYM). A propeptide spanning residues 30–61 (APMNQAHVLTTGSPLELSRQSEEMRILNRSKR) is cleaved from the precursor. 5 consecutive Cadherin domains span residues 62-167 (GWVW…APEF), 168-276 (LNGP…PPKF), 277-391 (AQSL…PPVF), 392-494 (SSPT…DNAP), and 495-616 (EFAS…YVLP). The Extracellular portion of the chain corresponds to 62-621 (GWVWNQMFVL…PYVLPIGLSM (560 aa)). N-linked (GlcNAc...) asparagine glycosylation is present at asparagine 188. N-linked (GlcNAc...) asparagine glycans are attached at residues asparagine 463, asparagine 473, and asparagine 544. The chain crosses the membrane as a helical span at residues 622–642 (GALIAILACIILLLVIVVLFV). Topologically, residues 643–799 (TLRRHKNEPL…YSVGESDKET (157 aa)) are cytoplasmic. The residue at position 795 (serine 795) is a Phosphoserine.

Its subcellular location is the cell membrane. In terms of biological role, cadherins are calcium-dependent cell adhesion proteins. They preferentially interact with themselves in a homophilic manner in connecting cells; cadherins may thus contribute to the sorting of heterogeneous cell types. In Rattus norvegicus (Rat), this protein is Cadherin-8 (Cdh8).